Consider the following 166-residue polypeptide: Desiccation-related protein At2g46140 (166 aa).

This sequence belongs to the LEA type 2 family.

This Arabidopsis thaliana (Mouse-ear cress) protein is Desiccation-related protein At2g46140.